A 264-amino-acid chain; its full sequence is MNKILDQIRTEHPLVICYTNDVVKNFTANGLLSLGASPTMSEAPQEAEDFYPVAGSVLINIGTLTKHHEHAMLENAKIANETETPLVFDPVAVGASKYRKDFCKYFLKKIKPTVIKGNASEILALIDDTATMKGTDSADNLDVVDIAEKAYKEYQTAIILTGETDVIVQDNKVVKLSNGSHFLAKITGAGCLLGAVVGAFLFRNTHPSIETLIEAVSVYNIAAERAEQLSDSKGPGTFLTQFIDALYRIDSDAVAENCNLEEVK.

Met-40 is a substrate binding site. Positions 116 and 161 each coordinate ATP. Position 188 (Gly-188) interacts with substrate.

It belongs to the Thz kinase family. The cofactor is Mg(2+).

The catalysed reaction is 5-(2-hydroxyethyl)-4-methylthiazole + ATP = 4-methyl-5-(2-phosphooxyethyl)-thiazole + ADP + H(+). Its pathway is cofactor biosynthesis; thiamine diphosphate biosynthesis; 4-methyl-5-(2-phosphoethyl)-thiazole from 5-(2-hydroxyethyl)-4-methylthiazole: step 1/1. In terms of biological role, catalyzes the phosphorylation of the hydroxyl group of 4-methyl-5-beta-hydroxyethylthiazole (THZ). The chain is Hydroxyethylthiazole kinase from Staphylococcus carnosus (strain TM300).